A 404-amino-acid chain; its full sequence is MVSAVSRQLVNRQLNRVLLRNARIAPFARATRFYSSKYAQESENAKRHKMGLLIAGVAVAGAIVFVTPPQWKKYFRAAKKVEEVAESKEDPVSEAAEEVSESVQESTEEPQQSQEKETADVGNEQAQDESASSGDSEAKKAHDEFADQNEASEKESAPMGESADADQTAKDETVAEKTGNSKSESSESDQSEQDILSSDLEETMETVSEADKELHQISDNTVLSSEEDKTPKAEELKSTSPSGNDEEPKKEDDSSKTIHSLNSEKDMEAVEEEVKQESAYNPDTGEINWDCPCLGGMAHGPCGEEFKAAFSCFVYSEAEPKGIDCVEKFQHMQDCFRRYPEHYAEQLADPADDENVDHEKNLSEGKDTGVDSTPPKDEAYLKTEKEKKIEENASPDEDTASKKD.

The transit peptide at 1-34 (MVSAVSRQLVNRQLNRVLLRNARIAPFARATRFY) directs the protein to the mitochondrion. The Mitochondrial matrix segment spans residues 35–50 (SSKYAQESENAKRHKM). Residues 51 to 71 (GLLIAGVAVAGAIVFVTPPQW) traverse the membrane as a helical; Signal-anchor for type II membrane protein segment. Residues 72 to 404 (KKYFRAAKKV…PDEDTASKKD (333 aa)) lie on the Mitochondrial intermembrane side of the membrane. The disordered stretch occupies residues 84-287 (VAESKEDPVS…SAYNPDTGEI (204 aa)). Over residues 101-113 (ESVQESTEEPQQS) the composition is skewed to low complexity. A compositionally biased stretch (polar residues) spans 124–135 (EQAQDESASSGD). 3 stretches are compositionally biased toward basic and acidic residues: residues 136-156 (SEAK…EKES), 226-237 (EEDKTPKAEELK), and 246-276 (EEPK…EVKQ). Cystine bridges form between Cys-291–Cys-293, Cys-302–Cys-335, and Cys-312–Cys-325. Residues 299–343 (HGPCGEEFKAAFSCFVYSEAEPKGIDCVEKFQHMQDCFRRYPEHY) enclose the CHCH domain. 2 short sequence motifs (cx9C motif) span residues 302 to 312 (CGEEFKAAFSC) and 325 to 335 (CVEKFQHMQDC). Positions 346–404 (QLADPADDENVDHEKNLSEGKDTGVDSTPPKDEAYLKTEKEKKIEENASPDEDTASKKD) are disordered. The segment covering 357–391 (DHEKNLSEGKDTGVDSTPPKDEAYLKTEKEKKIEE) has biased composition (basic and acidic residues).

In terms of assembly, monomer. Requires Cu(2+) as cofactor. It depends on Zn(2+) as a cofactor.

It is found in the mitochondrion inner membrane. In terms of biological role, required for the import and folding of small cysteine-containing proteins (small Tim) in the mitochondrial intermembrane space (IMS). Forms a redox cycle with ERV1 that involves a disulfide relay system. Precursor proteins to be imported into the IMS are translocated in their reduced form into the mitochondria. The oxidized form of MIA40 forms a transient intermolecular disulfide bridge with the reduced precursor protein, resulting in oxidation of the precursor protein that now contains an intramolecular disulfide bond and is able to undergo folding in the IMS. The polypeptide is Mitochondrial intermembrane space import and assembly protein 40 (MIA40) (Candida glabrata (strain ATCC 2001 / BCRC 20586 / JCM 3761 / NBRC 0622 / NRRL Y-65 / CBS 138) (Yeast)).